The following is a 930-amino-acid chain: MLSGILIAALLMTLWGGWQPDIAHASDEFDALRIKWATLLTGGPALDPADSDIAARTDKLAQDANDYWEDMDLSSSRTYIWYALRGNGTSDNVNAVYERLRTMALAATTVGSSLYGNADLKEDILDALDWLYVNSYNSTRSRSAYNWWHWQLGIPMSLNDIAVLLYDDISAARMATYMDTIDYFTPSIGLTGANRAWQAIVVGVRAVIVKDAVKLAAARNGLSGTGIFPYATGGDGFYADGSFVQHTTFAYTGGYGSSVLETTANLMYLLSGSTWSVSDPNQSNVWQWIYEAYRPLLYKGAMMDMVRGREISRSYAQDHAVGHGIVASIVRLAQFAPAPHAAAFKQIAKRVIQEDTFSSFYGDVSTDTIRLAKAIVDDPSIAPAAAPNLYKQYAAMDRAVLQRPGFALGLALYSTRISSYESINSENGRGWYTGAGATYLYNQDLAQYSEDYWPTVDAYRIPGTTVASGTPIASGTGTSSWTGGVSLAGQYGASGMDLSYGAYNLSARKSWFMFDDEIVALGSGISSTAGIPIETVVDNRKLNGAGDNAWTANGAALSTGLGVAQTLTGVNWVHLAGNTADGSDIGYYFPGGATLQTKREARTGTWKQINNRPATPSTAVTRNYETMWIDHGTNPSGASYGYVLLPNKTSAQVGAYAADPAIEIVVNTSGVQSVKEKTLGLVGANFWTDTTQTADLITSNKKASVMTREIADERLEASVSDPTQANNGTIAIELARSAEGYSADPGITVTQLAPTIKFTVNVNGAKGKSFHASFQLGEDTSGPVDPGEPELPSVIVDNADSAGVTRTGTWKTASTQTDRYGANYLHDDNAGKGTKSVTFTPNLPIAGSYEVYLMWPAHFNREDAVQVDVGHASGTTRTAVDQRSGGGVWHSIGTYEFLAGSGGSVTIRNDALGSPDGYVVADAVKFVAVG.

The signal sequence occupies residues Met1–Ala25. Xanthan contacts are provided by residues Asn146–Trp148, His246, Tyr255, Arg309, Arg313–Tyr315, and Asn424. Residue Tyr255 is the Proton donor/acceptor of the active site. Ca(2+) is bound by residues Asp515, Asp516, and Glu517. Arg612 is a xanthan binding site. Glu676 is a binding site for Ca(2+).

Belongs to the polysaccharide lyase 8 family. As to quaternary structure, monomer.

The protein resides in the secreted. The enzyme catalyses Eliminative cleavage of the terminal beta-D-mannosyl-(1-&gt;4)-beta-D-glucuronosyl linkage of the side-chain of the polysaccharide xanthan, leaving a 4-deoxy-alpha-L-threo-hex-4-enuronosyl group at the terminus of the side-chain.. With respect to regulation, activated by Co(2+) at 1 mM. Completely inhibited by Hg(2+) but not affected by other divalent cations. Intensely inhibited by NaCl and KCl at 150 mM, in particular by the Na(+) and K(+) ions but not the Cl(-) ions. Partially inhibited by iodoacetamide and N-ethylmaleimide at 1 mM but not by dithiothreitol, reduced glutathione or 2-mercaptoethanol. Functionally, plays a role in xanthan depolymerization pathway by cleaving the linkage between the terminal mannosyl and glucuronyl residues of the side chain of xanthan to liberate pyruvylated mannose. Is highly specific for pyruvylated side-chains of xanthan and is not effective with hyaluronate, chondroitin A, gellan, heparin or pectin. The sequence is that of Xanthan lyase from Bacillus sp. (strain GL1).